We begin with the raw amino-acid sequence, 101 residues long: NADH-quinone oxidoreductase subunit K (101 aa).

A run of 3 helical transmembrane segments spans residues 4–24 (LSHYLTVAAILFTLGVLGIFI), 29–49 (IIVILMSVELILLAVNINLVA), and 65–85 (FVLTVAAAEAAIGLAILVVFF).

The protein belongs to the complex I subunit 4L family. NDH-1 is composed of 14 different subunits. Subunits NuoA, H, J, K, L, M, N constitute the membrane sector of the complex.

The protein resides in the cell inner membrane. The enzyme catalyses a quinone + NADH + 5 H(+)(in) = a quinol + NAD(+) + 4 H(+)(out). In terms of biological role, NDH-1 shuttles electrons from NADH, via FMN and iron-sulfur (Fe-S) centers, to quinones in the respiratory chain. The immediate electron acceptor for the enzyme in this species is believed to be ubiquinone. Couples the redox reaction to proton translocation (for every two electrons transferred, four hydrogen ions are translocated across the cytoplasmic membrane), and thus conserves the redox energy in a proton gradient. This is NADH-quinone oxidoreductase subunit K from Methylobacterium nodulans (strain LMG 21967 / CNCM I-2342 / ORS 2060).